The chain runs to 232 residues: Ribose-5-phosphate isomerase A (232 aa).

Residues 28-31 (TGST), 83-86 (DGAD), and 96-99 (KGGG) contribute to the substrate site. The active-site Proton acceptor is the glutamate 105. Residue lysine 123 coordinates substrate.

Belongs to the ribose 5-phosphate isomerase family. In terms of assembly, homodimer.

The enzyme catalyses aldehydo-D-ribose 5-phosphate = D-ribulose 5-phosphate. Its pathway is carbohydrate degradation; pentose phosphate pathway; D-ribose 5-phosphate from D-ribulose 5-phosphate (non-oxidative stage): step 1/1. Its function is as follows. Catalyzes the reversible conversion of ribose-5-phosphate to ribulose 5-phosphate. The chain is Ribose-5-phosphate isomerase A from Rhizobium leguminosarum bv. trifolii (strain WSM2304).